The primary structure comprises 863 residues: MGYDSQVRTKKRHRITVVCTNCKKRKSKCDRTKPCGTCVRLGDVDSCVYLTDSSGQPESSPSLNDADPLRKQSTPAERISPGFIKKRRSSQTRQDEDHWQRVRELENQSSLYYLPIHEETPFFIDLIPNGFYLETKRSADNLFGLFTDRAIENRDPYLQAMVTFRSIAIKKMMDKLGSNGNNVKNGSLPKSFEALSTFDADDERHISDDVVGKGNNFRMHQTIHKSLFNKFAQYRENNAKKFSSETILAKDYLPPLKILESEVLALFEEKIYNMIPIFDMKVLRHEITIFYQNIVEKGNPISIKHYDHMVFCIILLIIKICRLSVQFSKLTPYIYPVLQEIDTSKFLALVKHYLFETKVLRKCNLLQLQCLILLRFLHWCAPEDGDGPETQYCQILMGTIISSCKEMGINWYCFSHPEKYSFKINRHTRPSYDIMKPSDYISVFRKIWSYVLFWDRKMCFISGEECQIGKTLQCHFKEEADTPTWYIRMLTLDNLMKKINDTLNDDPGKVDLNLLHRLINDLKRNFHILKSLSKNEKETMRHFDFEMEWIIDLFSLSLLHGEMIFYEYDCNITKFYKSFQDLWDMVIHISEKCYNYFFNSDALEVDSLTKFYTNRIVEIVANKVLVIVPAFILRGDRFKTIQYADKKKMIEFLYGVSSVYFNEFGFEYYRCFRKMFTAKIAYKILNRSCEKDAWRIILKFLLNELKLEDNGDSYIDYNDMRLNDICPIILEFQETVQKYDGYRPDILSIWNNEFYPIGKYNDDMTGFKFQMRIKEMQEFLDMEKYSDRFNIFSSFYDHASSQLAKHTEVDTNISITNEQVAEIPQKELLQQPLAPALPVNDLIVSEFDVIEDIFDPVDFVSFF.

The segment at residues Val18–Cys47 is a DNA-binding region (zn(2)-C6 fungal-type). The span at Asp52–Leu63 shows a compositional bias: polar residues. The segment at Asp52–Trp99 is disordered.

The protein belongs to the OAF3 family.

It localises to the cytoplasm. Its subcellular location is the nucleus. The protein localises to the mitochondrion. Its function is as follows. Transcriptional inhibitor with a significantly increased number of target genes in response to oleate. This chain is Oleate activated transcription factor 3 (OAF3), found in Saccharomyces cerevisiae (strain ATCC 204508 / S288c) (Baker's yeast).